A 457-amino-acid chain; its full sequence is Transcription factor E2F3 (457 aa).

A disordered region spans residues 80–171 (LLPSVPGTEP…PKSPSEKTRY (92 aa)). A compositionally biased stretch (polar residues) spans 93 to 102 (SLYTTPQGPS). The tract at residues 96 to 145 (TTPQGPSSRVGLLQQPPAPGRGGGGGPPAKRRLELGESGHQYLSDGLKTP) is cyclin A/CDK2 binding. Residues 147-237 (GKGRAALRSP…KNNVQWMGCS (91 aa)) mediate DNA binding. Positions 155 to 164 (SPDSPKTPKS) are enriched in low complexity. The leucine-zipper stretch occupies residues 196–217 (LNKAAEVLKVQKRRIYDITNVL). A DEF box motif is present at residues 201–237 (EVLKVQKRRIYDITNVLEGIHLIKKKSKNNVQWMGCS). Residues 238–329 (LSEDGGMLAQ…VPDSIESLQI (92 aa)) are dimerization. The interval 350 to 387 (HRPMKTNNQDHNGNIPKPTSKDLASNNSGHSDCSVSTA) is disordered. The span at 371-387 (DLASNNSGHSDCSVSTA) shows a compositional bias: polar residues. The interval 383-457 (SVSTANLSPL…LPLVEDFMCS (75 aa)) is transactivation. Residues 424 to 441 (EDYLLSLGEEEGISDLFD) are retinoblastoma protein binding.

The protein belongs to the E2F/DP family. As to quaternary structure, component of the DRTF1/E2F transcription factor complex. Binds cooperatively with TFDP1/Dp-1 to E2F sites. Interacts with retinoblastoma protein RB1 and related proteins (such as RBL1) that inhibit the E2F transactivation domain. Binds EAPP.

It is found in the nucleus. Functionally, transcription activator that binds DNA cooperatively with DP proteins through the E2 recognition site, 5'-TTTC[CG]CGC-3' found in the promoter region of a number of genes whose products are involved in cell cycle regulation or in DNA replication. The DRTF1/E2F complex functions in the control of cell-cycle progression from G1 to S phase. E2F3 binds specifically to RB1 in a cell-cycle dependent manner. Inhibits adipogenesis, probably through the repression of CEBPA binding to its target gene promoters. In Mus musculus (Mouse), this protein is Transcription factor E2F3 (E2f3).